The sequence spans 115 residues: Large ribosomal subunit protein bL20 (115 aa).

Belongs to the bacterial ribosomal protein bL20 family.

Functionally, binds directly to 23S ribosomal RNA and is necessary for the in vitro assembly process of the 50S ribosomal subunit. It is not involved in the protein synthesizing functions of that subunit. The sequence is that of Large ribosomal subunit protein bL20 from Prochlorococcus marinus (strain MIT 9515).